The primary structure comprises 190 residues: Segregation and condensation protein B (190 aa).

This sequence belongs to the ScpB family. Homodimer. Homodimerization may be required to stabilize the binding of ScpA to the Smc head domains. Component of a cohesin-like complex composed of ScpA, ScpB and the Smc homodimer, in which ScpA and ScpB bind to the head domain of Smc. The presence of the three proteins is required for the association of the complex with DNA.

Its subcellular location is the cytoplasm. In terms of biological role, participates in chromosomal partition during cell division. May act via the formation of a condensin-like complex containing Smc and ScpA that pull DNA away from mid-cell into both cell halves. This chain is Segregation and condensation protein B, found in Bacillus thuringiensis subsp. konkukian (strain 97-27).